The chain runs to 205 residues: ATP phosphoribosyltransferase (205 aa).

This sequence belongs to the ATP phosphoribosyltransferase family. Short subfamily. Heteromultimer composed of HisG and HisZ subunits.

The protein localises to the cytoplasm. The catalysed reaction is 1-(5-phospho-beta-D-ribosyl)-ATP + diphosphate = 5-phospho-alpha-D-ribose 1-diphosphate + ATP. The protein operates within amino-acid biosynthesis; L-histidine biosynthesis; L-histidine from 5-phospho-alpha-D-ribose 1-diphosphate: step 1/9. Its function is as follows. Catalyzes the condensation of ATP and 5-phosphoribose 1-diphosphate to form N'-(5'-phosphoribosyl)-ATP (PR-ATP). Has a crucial role in the pathway because the rate of histidine biosynthesis seems to be controlled primarily by regulation of HisG enzymatic activity. The sequence is that of ATP phosphoribosyltransferase from Staphylococcus saprophyticus subsp. saprophyticus (strain ATCC 15305 / DSM 20229 / NCIMB 8711 / NCTC 7292 / S-41).